Here is a 469-residue protein sequence, read N- to C-terminus: Maintenance of mitochondrial morphology protein 1 (469 aa).

The Lumenal segment spans residues 1 to 25; it reads MADEVPTAVPLATPAGSSSLSFTQG. The helical transmembrane segment at 26–46 threads the bilayer; it reads FLLGQLSIAILIFCFIKFFIF. Over 47-469 the chain is Cytoplasmic; it reads GEPPSADDRA…GMRWRGALPR (423 aa). One can recognise an SMP-LTD domain in the interval 124-363; it reads QPESLDWFNV…EPRFQQIVLP (240 aa). The segment covering 266-299 has biased composition (low complexity); it reads SSSPPSTTAPMPSPTSNTHRSSSPSRPASSSGAP. Disordered regions lie at residues 266 to 304 and 426 to 469; these read SSSPPSTTAPMPSPTSNTHRSSSPSRPASSSGAPPHRPT and EAEG…ALPR. Basic and acidic residues-rich tracts occupy residues 426-439 and 449-462; these read EAEGAKMREAEIRA and ERSRGRDDRADGMR.

It belongs to the MMM1 family. In terms of assembly, homodimer. Component of the ER-mitochondria encounter structure (ERMES) or MDM complex, composed of mmm1, MDM10, MDM12 and MDM34. A mmm1 homodimer associates with one molecule of MDM12 on each side in a pairwise head-to-tail manner, and the SMP-LTD domains of mmm1 and MDM12 generate a continuous hydrophobic tunnel for phospholipid trafficking.

The protein localises to the endoplasmic reticulum membrane. Functionally, component of the ERMES/MDM complex, which serves as a molecular tether to connect the endoplasmic reticulum (ER) and mitochondria. Components of this complex are involved in the control of mitochondrial shape and protein biogenesis, and function in nonvesicular lipid trafficking between the ER and mitochondria. The MDM12-mmm1 subcomplex functions in the major beta-barrel assembly pathway that is responsible for biogenesis of all outer membrane beta-barrel proteins, and acts in a late step after the SAM complex. The MDM10-MDM12-mmm1 subcomplex further acts in the TOM40-specific pathway after the action of the MDM12-mmm1 complex. Essential for establishing and maintaining the structure of mitochondria and maintenance of mtDNA nucleoids. This Pyrenophora tritici-repentis (strain Pt-1C-BFP) (Wheat tan spot fungus) protein is Maintenance of mitochondrial morphology protein 1.